The primary structure comprises 912 residues: Multiple C2 and transmembrane domain-containing protein (912 aa).

A compositionally biased stretch (low complexity) spans 1 to 33 (MSRIQYVDQVDQVELDQQQQPGSSSTVSGSTPP). Disordered stretches follow at residues 1–80 (MSRI…KRAK) and 145–165 (SSEG…IGGS). Residues 38–49 (PHGSPSLQQSQR) are compositionally biased toward polar residues. 3 C2 domains span residues 218-337 (QANE…HLQL), 371-493 (RNSK…HLML), and 522-637 (ERYK…TLKD). Residues D252, D258, D305, D307, and D313 each coordinate Ca(2+). Ca(2+) is bound by residues D553, D559, D605, and D607. 2 consecutive transmembrane segments (helical) span residues 729–749 (IVAC…LIIL) and 826–846 (LTWL…FVPL). The segment at 887-912 (NQYRELPPSAPTDQTRNNPKKKLKGS) is disordered.

Ca(2+) serves as cofactor. Motor neurons (at protein level).

The protein localises to the endoplasmic reticulum membrane. Its function is as follows. Calcium sensor which is essential for the stabilization of normal baseline neurotransmitter release and for the induction and long-term maintenance of presynaptic homeostatic plasticity. This is Multiple C2 and transmembrane domain-containing protein from Drosophila melanogaster (Fruit fly).